We begin with the raw amino-acid sequence, 214 residues long: Ribosomal RNA large subunit methyltransferase E (214 aa).

G60, W62, D86, D102, and D127 together coordinate S-adenosyl-L-methionine. K167 acts as the Proton acceptor in catalysis.

It belongs to the class I-like SAM-binding methyltransferase superfamily. RNA methyltransferase RlmE family.

It is found in the cytoplasm. It catalyses the reaction uridine(2552) in 23S rRNA + S-adenosyl-L-methionine = 2'-O-methyluridine(2552) in 23S rRNA + S-adenosyl-L-homocysteine + H(+). Specifically methylates the uridine in position 2552 of 23S rRNA at the 2'-O position of the ribose in the fully assembled 50S ribosomal subunit. The sequence is that of Ribosomal RNA large subunit methyltransferase E from Herminiimonas arsenicoxydans.